Here is a 217-residue protein sequence, read N- to C-terminus: Ribosomal RNA large subunit methyltransferase E (217 aa).

Residues Gly71, Trp73, Asp91, Asp107, and Asp132 each contribute to the S-adenosyl-L-methionine site. Lys172 functions as the Proton acceptor in the catalytic mechanism.

It belongs to the class I-like SAM-binding methyltransferase superfamily. RNA methyltransferase RlmE family.

The protein resides in the cytoplasm. It carries out the reaction uridine(2552) in 23S rRNA + S-adenosyl-L-methionine = 2'-O-methyluridine(2552) in 23S rRNA + S-adenosyl-L-homocysteine + H(+). Specifically methylates the uridine in position 2552 of 23S rRNA at the 2'-O position of the ribose in the fully assembled 50S ribosomal subunit. The sequence is that of Ribosomal RNA large subunit methyltransferase E from Psychromonas ingrahamii (strain DSM 17664 / CCUG 51855 / 37).